Reading from the N-terminus, the 1406-residue chain is DNA topoisomerase 2 (1406 aa).

ATP contacts are provided by residues asparagine 69, asparagine 98, 126 to 128 (SSN), and 139 to 146 (GRNGYGAK). The interaction with DNA stretch occupies residues 332-334 (KKK). 363-365 (QTK) is a binding site for ATP. A Toprim domain is found at 441–555 (CTLILTEGDS…GLLDIPGFLI (115 aa)). Residues glutamate 447, aspartate 524, and aspartate 526 each coordinate Mg(2+). The Topo IIA-type catalytic domain maps to 690 to 1159 (IPSVLDGFKP…SAKDLWNNDL (470 aa)). The active-site O-(5'-phospho-DNA)-tyrosine intermediate is the tyrosine 780. An interaction with DNA region spans residues 963 to 972 (KLISPISLQN). Over residues 1079-1089 (EDEDEDLEESE) the composition is skewed to acidic residues. Disordered regions lie at residues 1079 to 1106 (EDEDEDLEESEEATRKKDKDDESTVNGP), 1183 to 1215 (KTKGGKRKRKGGDDDDYDPSGKKKPARRIKKIK), 1230 to 1287 (KIKA…DESG), and 1303 to 1406 (DEDA…FNDE). The segment covering 1090–1100 (EATRKKDKDDE) has biased composition (basic and acidic residues). A compositionally biased stretch (basic residues) spans 1204 to 1214 (KKKPARRIKKI). The span at 1261–1274 (DVTSNASTPSTTIF) shows a compositional bias: polar residues. The span at 1326 to 1336 (AKKKAPPKRKA) shows a compositional bias: basic residues. Composition is skewed to acidic residues over residues 1341–1359 (SSEDELSDANLSEQDDEEV) and 1381–1406 (EISDEEDFIDDDEDEEVDSDESFNDE).

Belongs to the type II topoisomerase family. Homodimer. The cofactor is Mg(2+). Mn(2+) is required as a cofactor. It depends on Ca(2+) as a cofactor.

It localises to the nucleus. The catalysed reaction is ATP-dependent breakage, passage and rejoining of double-stranded DNA.. In terms of biological role, control of topological states of DNA by transient breakage and subsequent rejoining of DNA strands. Topoisomerase II makes double-strand breaks. This chain is DNA topoisomerase 2 (TOP2), found in Candida glabrata (strain ATCC 2001 / BCRC 20586 / JCM 3761 / NBRC 0622 / NRRL Y-65 / CBS 138) (Yeast).